Here is a 383-residue protein sequence, read N- to C-terminus: Probable cytosolic iron-sulfur protein assembly protein 1 (383 aa).

7 WD repeats span residues 10–49, 56–108, 135–175, 182–221, 228–275, 302–341, and 349–383; these read AHND…KFPL, THKR…VEYD, GHEN…EEFE, DHSQ…DEWS, GHEG…EDDE, VHKY…KWVI, and HGVH…LWKI.

The protein belongs to the WD repeat CIA1 family. In terms of assembly, interacts with NAR1.

It localises to the cytoplasm. The protein localises to the nucleus. Functionally, essential component of the cytosolic iron-sulfur (Fe/S) protein assembly machinery. Required for the maturation of extramitochondrial Fe/S proteins. This is Probable cytosolic iron-sulfur protein assembly protein 1 from Candida albicans (strain SC5314 / ATCC MYA-2876) (Yeast).